The chain runs to 194 residues: Probable GTP-binding protein EngB (194 aa).

In terms of domain architecture, EngB-type G spans 22 to 194 (GKPEIALVGR…SVWEWITAHM (173 aa)). Residues 30 to 37 (GRSNVGKS), 57 to 61 (GKTQT), 75 to 78 (DVPG), 142 to 145 (TKSD), and 175 to 177 (FSS) each bind GTP. Serine 37 and threonine 59 together coordinate Mg(2+).

The protein belongs to the TRAFAC class TrmE-Era-EngA-EngB-Septin-like GTPase superfamily. EngB GTPase family. Mg(2+) serves as cofactor.

In terms of biological role, necessary for normal cell division and for the maintenance of normal septation. In Leuconostoc citreum (strain KM20), this protein is Probable GTP-binding protein EngB.